The sequence spans 61 residues: Large ribosomal subunit protein bL28 (61 aa).

It belongs to the bacterial ribosomal protein bL28 family.

This chain is Large ribosomal subunit protein bL28, found in Nautilia profundicola (strain ATCC BAA-1463 / DSM 18972 / AmH).